Reading from the N-terminus, the 886-residue chain is 3',5'-cyclic-AMP phosphodiesterase 4A (886 aa).

Positions 1–128 are disordered; it reads MEPPTVPSER…GRSPLDSQAS (128 aa). Position 13 is a phosphoserine (Ser-13). Positions 36–46 are enriched in low complexity; the sequence is QPRTPIRIQQR. The span at 51–78 shows a compositional bias: basic and acidic residues; that stretch reads SAERAERERQPHRPIERADAMDTSDRPG. Over residues 93-104 the composition is skewed to gly residues; sequence TGTGSGGAGGGS. Phosphoserine occurs at positions 119 and 123. Ser-152 bears the Phosphoserine; by MAPKAPK2 mark. Residues Ser-157, Ser-165, and Ser-209 each carry the phosphoserine modification. The disordered stretch occupies residues 294-331; that stretch reads KQNEVEIPSPTMKEREKQQAPRPRPSQPPPPPVPHLQP. A compositionally biased stretch (pro residues) spans 315-328; it reads RPRPSQPPPPPVPH. Ser-346 bears the Phosphoserine mark. In terms of domain architecture, PDEase spans 357 to 686; that stretch reads VKTDQEELLA…DWYYSAIRQS (330 aa). Residue Lys-358 forms a Glycyl lysine isopeptide (Lys-Gly) (interchain with G-Cter in SUMO) linkage. Catalysis depends on His-433, which acts as the Proton donor. His-433 is a 3',5'-cyclic AMP binding site. 2 residues coordinate AMP: His-433 and His-437. Zn(2+) is bound by residues His-437, His-473, Asp-474, and Asp-591. The AMP site is built by Asp-474, Asp-591, Gln-642, and Phe-645. Position 474 (Asp-474) interacts with Mg(2+). Asp-474 contributes to the Mn(2+) binding site. 3',5'-cyclic AMP contacts are provided by Gln-642 and Phe-645. Disordered stretches follow at residues 682 to 705 and 866 to 886; these read AIRQ…PLPD and FGED…GDPT. 2 positions are modified to phosphoserine: Ser-686 and Ser-688. Residues 876–886 are compositionally biased toward gly residues; that stretch reads PGGGGSGGDPT.

This sequence belongs to the cyclic nucleotide phosphodiesterase family. PDE4 subfamily. As to quaternary structure, interacts with LYN (via SH3 domain). Interacts with ARRB2. Zn(2+) is required as a cofactor. The cofactor is Mg(2+). Mn(2+) serves as cofactor. Proteolytically cleaved by CASP3. Post-translationally, phosphorylated at Ser-119 by PKA. As to expression, expressed in lymphoid cell subsets including CD8-positive T cells and T-helper 2 cells. Expressed in dendritic cells. In terms of tissue distribution, highly expressed in liver, stomach, testis, thyroid and adrenal glands and at a lower extent in placenta, kidney, pancreas, ovary, uterus and skin. Expressed in myeloid cell subsets including dendritic cells, monocytes, macrophages, eosinophils and mast cells. Expressed in natural killer cells. Expressed in bronchial smooth muscle. Expressed at high levels in the heart and small intestine. It is also found in the brain, kidney, spleen, colon, salivary gland, ovary and peripheral blood lymphocytes. As to expression, expressed predominantly in skeletal muscle and brain and at lower levels in the testis. Found in specific neuronal subpopulations including cortical pyramidal neurons, horn neurons in the spinal cord and Purkinje cells in cerebellum (at protein level).

It is found in the cytoplasm. Its subcellular location is the perinuclear region. It localises to the cell projection. The protein localises to the ruffle membrane. The protein resides in the cytosol. It is found in the membrane. It catalyses the reaction 3',5'-cyclic AMP + H2O = AMP + H(+). It functions in the pathway purine metabolism; 3',5'-cyclic AMP degradation; AMP from 3',5'-cyclic AMP: step 1/1. Its activity is regulated as follows. Inhibited by rolipram, cilomilast, Ro 20-1724, roflumilast and denbufylline. Inhibited by rolipram. With respect to regulation, inhibited by rolipram and cilomilast. In terms of biological role, hydrolyzes the second messenger 3',5'-cyclic AMP (cAMP), which is a key regulator of many important physiological processes. Efficiently hydrolyzes cAMP. Functionally, efficiently hydrolyzes cAMP. The phosphodiesterase activity is not affected by calcium, calmodulin or cyclic GMP (cGMP) levels. Does not hydrolyze cGMP. The chain is 3',5'-cyclic-AMP phosphodiesterase 4A (PDE4A) from Homo sapiens (Human).